The following is an 87-amino-acid chain: Small ribosomal subunit protein uS15c (87 aa).

The protein belongs to the universal ribosomal protein uS15 family. In terms of assembly, part of the 30S ribosomal subunit.

Its subcellular location is the plastid. It is found in the chloroplast. This is Small ribosomal subunit protein uS15c (rps15) from Amborella trichopoda.